We begin with the raw amino-acid sequence, 339 residues long: Tetraacyldisaccharide 4'-kinase (339 aa).

ATP is bound at residue 62-69; it reads VAGGTGKT.

This sequence belongs to the LpxK family.

It catalyses the reaction a lipid A disaccharide + ATP = a lipid IVA + ADP + H(+). The protein operates within glycolipid biosynthesis; lipid IV(A) biosynthesis; lipid IV(A) from (3R)-3-hydroxytetradecanoyl-[acyl-carrier-protein] and UDP-N-acetyl-alpha-D-glucosamine: step 6/6. In terms of biological role, transfers the gamma-phosphate of ATP to the 4'-position of a tetraacyldisaccharide 1-phosphate intermediate (termed DS-1-P) to form tetraacyldisaccharide 1,4'-bis-phosphate (lipid IVA). The chain is Tetraacyldisaccharide 4'-kinase from Xylella fastidiosa (strain M12).